We begin with the raw amino-acid sequence, 1164 residues long: Auxin response factor 7 (1164 aa).

Residues 127-229 constitute a DNA-binding region (TF-B3); the sequence is FCKTLTASDT…QLLLGIRRAN (103 aa). Disordered stretches follow at residues 451 to 505, 536 to 555, 570 to 728, 765 to 858, and 903 to 930; these read HNNL…QQQL, QQLQ…QQQQ, HQQP…LLQQ, FLSP…SSSG, and KSKA…GENN. Residues 464–489 are compositionally biased toward polar residues; the sequence is LSFQTPHGGISSSNLQFNKQNQQAPM. Positions 570–635 are enriched in low complexity; sequence HQQPLQQQTQ…SQQASTHHLQ (66 aa). Residues 637–651 are compositionally biased toward polar residues; it reads QLVSGSMASSVITPP. Residues 652–671 are compositionally biased toward low complexity; sequence SSSLNQSFQQQQQQSKQLQQ. The span at 678–710 shows a compositional bias: polar residues; that stretch reads ASTSQSSVIETSKSSSNLMSAPPQETQFSRQVE. Composition is skewed to low complexity over residues 711–728 and 765–790; these read QQQP…LLQQ and FLSP…TLSQ. The segment covering 791-808 has biased composition (polar residues); that stretch reads GHQFPSSCTNNGLSTLQP. Residues 841 to 851 are compositionally biased toward low complexity; sequence PSSSTSPSTNN. The segment covering 903–921 has biased composition (polar residues); sequence KSKASLTDHQLEASASGTS. The PB1 domain occupies 1037 to 1130; sequence RTYTKVQKRG…EVQQMSLDGN (94 aa). A disordered region spans residues 1145–1164; the sequence is DSGNAWRGHYDDNSATSFNR.

It belongs to the ARF family. As to quaternary structure, homodimers and heterodimers. Interacts with the auxin-responsive proteins IAA1 and IAA12 (BODENLOS). Interacts (via PB1 domain) with IAA17 (via PB1 domain). Interacts with IAA19. Interacts with ARF5. Binds to JMJ30. Binds to ATXR2 in the nucleus. In terms of tissue distribution, expressed in the whole plant.

The protein resides in the nucleus. In terms of biological role, auxin response factors (ARFs) are transcriptional factors that bind specifically to the DNA sequence 5'-TGTCTC-3' found in the auxin-responsive promoter elements (AuxREs). Acts as a transcriptional activator of several tropic stimulus-induced (TSI) genes, including SAUR50. Formation of heterodimers with Aux/IAA proteins may alter their ability to modulate early auxin response genes expression. Required for differential growth responses of aerial tissues. Involved in ethylene responses. Regulates lateral root formation through direct regulation of LBD16 and/or LBD29. Functionally redundant with ARF19. Mediates embryo axis formation and vascular tissues differentiation. Functionally redundant with ARF5. Involved in cellular dedifferentiation during callus formation on callus-inducing medium (CIM) and in an ATXR2-dependent manner. The protein is Auxin response factor 7 of Arabidopsis thaliana (Mouse-ear cress).